The chain runs to 388 residues: Beta-1,4-galactosyltransferase 5 (388 aa).

Residues 1–14 (MRARRGLLRLPRRS) lie on the Cytoplasmic side of the membrane. Residues 15–35 (LLAALFFFSLSSSLLYFVYVA) traverse the membrane as a helical; Signal-anchor for type II membrane protein segment. Residues 36–388 (PGIVNTYLFM…TPELAQVTEY (353 aa)) are Lumenal-facing. N-linked (GlcNAc...) asparagine glycosylation is found at Asn77, Asn81, Asn90, and Asn128. A disulfide bond links Cys114 and Cys158. UDP-alpha-D-galactose contacts are provided by residues 169–173 (PFRNR), 208–210 (FNR), 235–236 (VD), Tyr264, and Trp296. The cysteines at positions 229 and 248 are disulfide-linked. Position 236 (Asp236) interacts with Mn(2+). N-acetyl-D-glucosamine is bound at residue 298–301 (GEDD). Mn(2+) is bound at residue His329. Residue 329–330 (HH) participates in UDP-alpha-D-galactose binding. N-acetyl-D-glucosamine is bound at residue Arg340. N-linked (GlcNAc...) asparagine glycans are attached at residues Asn360, Asn364, and Asn373.

It belongs to the glycosyltransferase 7 family. Requires Mn(2+) as cofactor. As to expression, highest levels in heart, brain, liver and kidney with lower levels in spleen, lung and testis.

The protein resides in the golgi apparatus. Its subcellular location is the golgi stack membrane. It carries out the reaction a beta-D-glucosyl-(1&lt;-&gt;1')-N-acylsphing-4-enine + UDP-alpha-D-galactose = a beta-D-Gal-(1-&gt;4)-beta-D-Glc-(1&lt;-&gt;1)-Cer(d18:1(4E)) + UDP + H(+). The protein operates within protein modification; protein glycosylation. Its pathway is sphingolipid metabolism. Catalyzes the synthesis of lactosylceramide (LacCer) via the transfer of galactose from UDP-galactose to glucosylceramide (GlcCer). LacCer is the starting point in the biosynthesis of all gangliosides (membrane-bound glycosphingolipids) which play pivotal roles in the CNS including neuronal maturation and axonal and myelin formation. Plays a role in the glycosylation of BMPR1A and regulation of its protein stability. Essential for extraembryonic development during early embryogenesis. The protein is Beta-1,4-galactosyltransferase 5 of Mus musculus (Mouse).